We begin with the raw amino-acid sequence, 24 residues long: Probable caffeoyl-CoA O-methyltransferase (24 aa).

This sequence belongs to the class I-like SAM-binding methyltransferase superfamily. Cation-dependent O-methyltransferase family. CCoAMT subfamily. Requires a divalent metal cation as cofactor.

The enzyme catalyses (E)-caffeoyl-CoA + S-adenosyl-L-methionine = (E)-feruloyl-CoA + S-adenosyl-L-homocysteine + H(+). It participates in aromatic compound metabolism; phenylpropanoid biosynthesis. Functionally, methylates caffeoyl-CoA to feruloyl-CoA and 5-hydroxyferuloyl-CoA to sinapoyl-CoA. Plays a role in the synthesis of feruloylated polysaccharides. Involved in the reinforcement of the plant cell wall. Also involved in the responding to wounding or pathogen challenge by the increased formation of cell wall-bound ferulic acid polymers. This is Probable caffeoyl-CoA O-methyltransferase from Pinus pinaster (Maritime pine).